A 123-amino-acid chain; its full sequence is Ribosome-binding factor A (123 aa).

Belongs to the RbfA family. In terms of assembly, monomer. Binds 30S ribosomal subunits, but not 50S ribosomal subunits or 70S ribosomes.

Its subcellular location is the cytoplasm. Functionally, one of several proteins that assist in the late maturation steps of the functional core of the 30S ribosomal subunit. Associates with free 30S ribosomal subunits (but not with 30S subunits that are part of 70S ribosomes or polysomes). Required for efficient processing of 16S rRNA. May interact with the 5'-terminal helix region of 16S rRNA. The protein is Ribosome-binding factor A of Lactobacillus gasseri (strain ATCC 33323 / DSM 20243 / BCRC 14619 / CIP 102991 / JCM 1131 / KCTC 3163 / NCIMB 11718 / NCTC 13722 / AM63).